We begin with the raw amino-acid sequence, 280 residues long: Phosphatidylglycerol--prolipoprotein diacylglyceryl transferase (280 aa).

The next 3 membrane-spanning stretches (helical) occupy residues 19 to 39, 56 to 76, and 90 to 110; these read LSVR…YFVA, IIFY…VIFQ, and IWHG…AGVI. Arg138 provides a ligand contact to a 1,2-diacyl-sn-glycero-3-phospho-(1'-sn-glycerol). The next 2 membrane-spanning stretches (helical) occupy residues 204–224 and 236–256; these read LGET…FIEG and IRVA…LIVY.

Belongs to the Lgt family.

The protein localises to the cell membrane. The catalysed reaction is L-cysteinyl-[prolipoprotein] + a 1,2-diacyl-sn-glycero-3-phospho-(1'-sn-glycerol) = an S-1,2-diacyl-sn-glyceryl-L-cysteinyl-[prolipoprotein] + sn-glycerol 1-phosphate + H(+). The protein operates within protein modification; lipoprotein biosynthesis (diacylglyceryl transfer). Its function is as follows. Catalyzes the transfer of the diacylglyceryl group from phosphatidylglycerol to the sulfhydryl group of the N-terminal cysteine of a prolipoprotein, the first step in the formation of mature lipoproteins. This Staphylococcus aureus (strain MRSA252) protein is Phosphatidylglycerol--prolipoprotein diacylglyceryl transferase.